Reading from the N-terminus, the 475-residue chain is Beta-amyrin 16-alpha-hydroxylase CYP87D16 (475 aa).

Residues 3–23 (VVGLIGVAVVTILITQYVYKW) traverse the membrane as a helical segment. Cys-423 serves as a coordination point for heme.

This sequence belongs to the cytochrome P450 family. Requires heme as cofactor.

It localises to the membrane. The enzyme catalyses beta-amyrin + reduced [NADPH--hemoprotein reductase] + O2 = 16alpha-hydroxy-beta-amyrin + oxidized [NADPH--hemoprotein reductase] + H2O + H(+). Involved in the biosynthetic pathway of maesasaponins, which are oleanane-type saponins with diverse biological activities. Catalyzes the C-16alpha oxidation of beta-amyrin to form 16alpha-hydroxy-beta-amyrin. The sequence is that of Beta-amyrin 16-alpha-hydroxylase CYP87D16 from Maesa lanceolata (False assegai).